The primary structure comprises 252 residues: Adenosylcobinamide-GDP ribazoletransferase (252 aa).

The next 7 membrane-spanning stretches (helical) occupy residues 35–55 (AMLPLIGLIVGCIQWVVFYIL), 58–78 (IFPANITAIFIILVGMVLIGG), 113–133 (FAVLALIFDILIKYSALSFII), 139–159 (YAIIITPIMSRCTLVFLFLIG), 170–190 (LFIENVSVKEFIISFIFMIVP), 192–212 (VLLIGYKYSVIIIVVSFIITL), and 231–251 (GANNEIVEMFTMLVFVALLYI).

It belongs to the CobS family. Mg(2+) is required as a cofactor.

The protein localises to the cell membrane. The catalysed reaction is alpha-ribazole + adenosylcob(III)inamide-GDP = adenosylcob(III)alamin + GMP + H(+). It carries out the reaction alpha-ribazole 5'-phosphate + adenosylcob(III)inamide-GDP = adenosylcob(III)alamin 5'-phosphate + GMP + H(+). The protein operates within cofactor biosynthesis; adenosylcobalamin biosynthesis; adenosylcobalamin from cob(II)yrinate a,c-diamide: step 7/7. Functionally, joins adenosylcobinamide-GDP and alpha-ribazole to generate adenosylcobalamin (Ado-cobalamin). Also synthesizes adenosylcobalamin 5'-phosphate from adenosylcobinamide-GDP and alpha-ribazole 5'-phosphate. The chain is Adenosylcobinamide-GDP ribazoletransferase from Clostridium tetani (strain Massachusetts / E88).